A 140-amino-acid polypeptide reads, in one-letter code: Probable prefoldin subunit 6 (140 aa).

Belongs to the prefoldin subunit beta family. Heterohexamer of two PFD-alpha type and four PFD-beta type subunits.

Binds specifically to cytosolic chaperonin (c-CPN) and transfers target proteins to it. Binds to nascent polypeptide chain and promotes folding in an environment in which there are many competing pathways for nonnative proteins. In Dictyostelium discoideum (Social amoeba), this protein is Probable prefoldin subunit 6 (pfdn6).